A 191-amino-acid chain; its full sequence is Cell division protein SepF (191 aa).

The disordered stretch occupies residues 150 to 191; the sequence is TSSSPEEASPSSVSPKNTPQYSVENNTAPEPAWGNSKLSAFS. Residues 151-164 are compositionally biased toward low complexity; that stretch reads SSSPEEASPSSVSP. The span at 165–177 shows a compositional bias: polar residues; that stretch reads KNTPQYSVENNTA.

Belongs to the SepF family. As to quaternary structure, homodimer. Interacts with FtsZ.

It is found in the cytoplasm. Functionally, cell division protein that is part of the divisome complex and is recruited early to the Z-ring. Probably stimulates Z-ring formation, perhaps through the cross-linking of FtsZ protofilaments. Its function overlaps with FtsA. The chain is Cell division protein SepF from Prochlorococcus marinus (strain MIT 9312).